Here is a 366-residue protein sequence, read N- to C-terminus: tRNA/tmRNA (uracil-C(5))-methyltransferase (366 aa).

S-adenosyl-L-methionine contacts are provided by glutamine 188, tyrosine 216, asparagine 221, glutamate 237, and aspartate 297. Cysteine 322 (nucleophile) is an active-site residue. Glutamate 356 functions as the Proton acceptor in the catalytic mechanism.

It belongs to the class I-like SAM-binding methyltransferase superfamily. RNA M5U methyltransferase family. TrmA subfamily.

It carries out the reaction uridine(54) in tRNA + S-adenosyl-L-methionine = 5-methyluridine(54) in tRNA + S-adenosyl-L-homocysteine + H(+). It catalyses the reaction uridine(341) in tmRNA + S-adenosyl-L-methionine = 5-methyluridine(341) in tmRNA + S-adenosyl-L-homocysteine + H(+). In terms of biological role, dual-specificity methyltransferase that catalyzes the formation of 5-methyluridine at position 54 (m5U54) in all tRNAs, and that of position 341 (m5U341) in tmRNA (transfer-mRNA). The protein is tRNA/tmRNA (uracil-C(5))-methyltransferase of Histophilus somni (strain 129Pt) (Haemophilus somnus).